The primary structure comprises 114 residues: DNA-directed RNA polymerase subunit omega (114 aa).

The protein belongs to the RNA polymerase subunit omega family. As to quaternary structure, the RNAP catalytic core consists of 2 alpha, 1 beta, 1 beta' and 1 omega subunit. When a sigma factor is associated with the core the holoenzyme is formed, which can initiate transcription.

The enzyme catalyses RNA(n) + a ribonucleoside 5'-triphosphate = RNA(n+1) + diphosphate. Functionally, promotes RNA polymerase assembly. Latches the N- and C-terminal regions of the beta' subunit thereby facilitating its interaction with the beta and alpha subunits. The polypeptide is DNA-directed RNA polymerase subunit omega (Erythrobacter litoralis (strain HTCC2594)).